The following is a 171-amino-acid chain: Non-specific lipid transfer protein GPI-anchored 19 (171 aa).

Positions Met-1–Ala-18 are cleaved as a signal peptide. Cystine bridges form between Cys-25-Cys-66, Cys-35-Cys-50, Cys-51-Cys-93, and Cys-64-Cys-103. N-linked (GlcNAc...) asparagine glycans are attached at residues Asn-72 and Asn-82. The interval Leu-113–Glu-149 is disordered. Residues Pro-118–Ser-141 show a composition bias toward low complexity. The GPI-anchor amidated serine moiety is linked to residue Ser-147. N-linked (GlcNAc...) asparagine glycosylation occurs at Asn-148. The propeptide at Asn-148–Ile-171 is removed in mature form.

Belongs to the plant LTP family.

The protein resides in the cell membrane. Functionally, probable lipid transfer protein. The chain is Non-specific lipid transfer protein GPI-anchored 19 from Arabidopsis thaliana (Mouse-ear cress).